The primary structure comprises 831 residues: uncharacterized protein (831 aa).

Positions 285–311 are disordered; it reads ALNLKRQQLKEEQKEQQSTGDRSDVST. 470–477 serves as a coordination point for ATP; the sequence is GDTGNGKS.

This is an uncharacterized protein from Bacillus subtilis (strain 168).